The sequence spans 64 residues: Large ribosomal subunit protein bL35 (64 aa).

It belongs to the bacterial ribosomal protein bL35 family.

The protein is Large ribosomal subunit protein bL35 of Acidothermus cellulolyticus (strain ATCC 43068 / DSM 8971 / 11B).